A 111-amino-acid polypeptide reads, in one-letter code: Nucleoid-associated protein CYB_2894 (111 aa).

Belongs to the YbaB/EbfC family. Homodimer.

The protein resides in the cytoplasm. It is found in the nucleoid. In terms of biological role, binds to DNA and alters its conformation. May be involved in regulation of gene expression, nucleoid organization and DNA protection. The chain is Nucleoid-associated protein CYB_2894 from Synechococcus sp. (strain JA-2-3B'a(2-13)) (Cyanobacteria bacterium Yellowstone B-Prime).